A 273-amino-acid polypeptide reads, in one-letter code: Epidermal growth factor-like protein 7 (273 aa).

The N-terminal stretch at 1–23 is a signal peptide; the sequence is MRGSQEVLLMWLLVLAVGGTEHA. Positions 27–104 constitute an EMI domain; that stretch reads GRRVCAVRAH…TSGLPGACGA (78 aa). 9 disulfides stabilise this stretch: Cys31/Cys89, Cys56/Cys62, Cys88/Cys102, Cys107/Cys117, Cys111/Cys123, Cys125/Cys134, Cys141/Cys152, Cys148/Cys161, and Cys163/Cys176. In terms of domain architecture, EGF-like 1 spans 103 to 135; the sequence is GAAICQPPCRNGGSCVQPGRCRCPAGWRGDTCQ. The Cell attachment site motif lies at 130–132; the sequence is RGD. The region spanning 137 to 177 is the EGF-like 2; calcium-binding domain; sequence DVDECSARRGGCPQRCVNTAGSYWCQCWEGHSLSADGTLCV. Positions 192-219 form a coiled coil; the sequence is VDSAMKEEVQRLQSRVDLLEEKLQLVLA.

In terms of assembly, interacts with ITGAV/ITGB3 in an RGD-dependent manner, increasing endothelial cell's motility.

The protein localises to the secreted. Its subcellular location is the extracellular space. Functionally, regulates vascular tubulogenesis in vivo. Inhibits platelet-derived growth factor (PDGF)-BB-induced smooth muscle cell migration and promotes endothelial cell adhesion to the extracellular matrix and angiogenesis. The protein is Epidermal growth factor-like protein 7 (EGFL7) of Homo sapiens (Human).